Consider the following 584-residue polypeptide: Optineurin (584 aa).

The segment at 1-32 is disordered; the sequence is MSHQPLSCLTEKGDSPCETPGNGPSNMVHPSL. Residues 38-180 adopt a coiled-coil conformation; it reads EELLQQMKEL…VSELQLKLNS (143 aa). Residues 58-219 form an interaction with Rab8 region; sequence MKLNNQAMKG…TPTRTDPISL (162 aa). The LIR motif lies at 186–191; that stretch reads DSFVEI. At serine 187 the chain carries Phosphoserine. 2 coiled-coil regions span residues 243–278 and 307–511; these read CLRE…HSST and IQVT…DIEE. The segment covering 267–295 has biased composition (basic and acidic residues); the sequence is DFEKKANGHSSTEKQTARRADREKEDKGQ. Residues 267–302 are disordered; sequence DFEKKANGHSSTEKQTARRADREKEDKGQESVGSEV. Serine 345 is modified (phosphoserine). Residues 414 to 584 are interaction with HD; that stretch reads TKQQAEKVDK…LQIHVMDCII (171 aa). The segment at 415–524 is interaction with MYO6; the sequence is KQQAEKVDKM…RQSLMEMQCR (110 aa). The short motif at 477–482 is the UBAN element; that stretch reads DFHAER. At serine 530 the chain carries Phosphoserine. A CCHC NOA-type zinc finger spans residues 554-584; it reads PRSIPIHSCPKCGEVLPDIDTLQIHVMDCII. 4 residues coordinate Zn(2+): cysteine 562, cysteine 565, histidine 578, and cysteine 582.

As to quaternary structure, self-associates. Interacts with HD, GTF3A, TRAF3, TBK1 and MYO6. Interacts (via UBAN) with ubiquitinated TFRC. Interacts with active GTP-bound Rab8 (RAB8A and/or RAB8B). Interacts with TBC1D17. Binds to linear ubiquitin chains. Interacts with LC3 family members MAP1LC3A, MAP1LC3B, GABARAP, GABARAPL1 and GABARAPL2; OPTN phosphorylation increases the association (at least with MAP1LC3B). Interacts with RAB12; the interaction may be indirect. Interacts with TBK1; this interaction leads to the Golgi localization of TBK1 and its subsequent activation. Interacts with palmitoyltransferase ZDHHC17/HIP14; the interaction does not lead to palmitoylation of OPTN. Interacts with CYLD. Interacts with TOM1; the interaction is indirect and is mediated by MYO6, which acts as a bridge between TOM1 and OPTN. Interacts with USP12; the interaction is independent of USP12 deubiquitinase activity and may be involved in regulation of autophagic flux. In terms of processing, phosphorylated by TBK1, leading to restrict bacterial proliferation in case of infection. In terms of tissue distribution, in eye, it is expressed in anterior segment, retina, and optic nerve blood vessels (at protein level). Highly expressed in adult liver, heart and testis.

It localises to the cytoplasm. The protein resides in the perinuclear region. The protein localises to the golgi apparatus. It is found in the trans-Golgi network. Its subcellular location is the cytoplasmic vesicle. It localises to the autophagosome. The protein resides in the recycling endosome. In terms of biological role, plays an important role in the maintenance of the Golgi complex, in membrane trafficking, in exocytosis, through its interaction with myosin VI and Rab8. Links myosin VI to the Golgi complex and plays an important role in Golgi ribbon formation. Plays a role in the activation of innate immune response during viral infection. Mechanistically, recruits TBK1 at the Golgi apparatus, promoting its trans-phosphorylation after RLR or TLR3 stimulation. In turn, activated TBK1 phosphorylates its downstream partner IRF3 to produce IFN-beta. Plays a neuroprotective role in the eye and optic nerve. May act by regulating membrane trafficking and cellular morphogenesis via a complex that contains Rab8 and huntingtin (HD). Mediates the interaction of Rab8 with the probable GTPase-activating protein TBC1D17 during Rab8-mediated endocytic trafficking, such as that of transferrin receptor (TFRC/TfR); regulates Rab8 recruitment to tubules emanating from the endocytic recycling compartment. Autophagy receptor that interacts directly with both the cargo to become degraded and an autophagy modifier of the MAP1 LC3 family; targets ubiquitin-coated bacteria (xenophagy), such as cytoplasmic Salmonella enterica, and appears to function in the same pathway as SQSTM1 and CALCOCO2/NDP52. This chain is Optineurin (Optn), found in Mus musculus (Mouse).